The sequence spans 436 residues: Xylose isomerase (436 aa).

Active-site residues include His100 and Asp103. The Mg(2+) site is built by Glu231, Glu267, His270, Asp295, Asp306, Asp308, and Asp338.

It belongs to the xylose isomerase family. In terms of assembly, homotetramer. The cofactor is Mg(2+).

The protein localises to the cytoplasm. It carries out the reaction alpha-D-xylose = alpha-D-xylulofuranose. The protein is Xylose isomerase of Rhizobium etli (strain CIAT 652).